Reading from the N-terminus, the 101-residue chain is Small ribosomal subunit protein uS14 (101 aa).

It belongs to the universal ribosomal protein uS14 family. Part of the 30S ribosomal subunit. Contacts proteins S3 and S10.

Its function is as follows. Binds 16S rRNA, required for the assembly of 30S particles and may also be responsible for determining the conformation of the 16S rRNA at the A site. This Pseudoalteromonas translucida (strain TAC 125) protein is Small ribosomal subunit protein uS14.